We begin with the raw amino-acid sequence, 122 residues long: Large ribosomal subunit protein uL14 (122 aa).

It belongs to the universal ribosomal protein uL14 family. In terms of assembly, part of the 50S ribosomal subunit. Forms a cluster with proteins L3 and L19. In the 70S ribosome, L14 and L19 interact and together make contacts with the 16S rRNA in bridges B5 and B8.

In terms of biological role, binds to 23S rRNA. Forms part of two intersubunit bridges in the 70S ribosome. This Hydrogenovibrio crunogenus (strain DSM 25203 / XCL-2) (Thiomicrospira crunogena) protein is Large ribosomal subunit protein uL14.